Here is a 166-residue protein sequence, read N- to C-terminus: Interferon gamma (166 aa).

Positions 1 to 23 (MKYTSYILAFQLCIILGSSSCYS) are cleaved as a signal peptide. Residue Gln-24 is modified to Pyrrolidone carboxylic acid. Asn-39, Asn-44, and Asn-106 each carry an N-linked (GlcNAc...) asparagine glycan.

It belongs to the type II (or gamma) interferon family. In terms of assembly, homodimer. In terms of tissue distribution, released primarily from activated T lymphocytes.

Its subcellular location is the secreted. In terms of biological role, produced by lymphocytes activated by specific antigens or mitogens. IFN-gamma, in addition to having antiviral activity, has important immunoregulatory functions. It is a potent activator of macrophages, it has antiproliferative effects on transformed cells and it can potentiate the antiviral and antitumor effects of the type I interferons. This chain is Interferon gamma (IFNG), found in Marmota monax (Woodchuck).